We begin with the raw amino-acid sequence, 863 residues long: Protein ARG5,6, mitochondrial (863 aa).

Residues 1–65 (MPSASLLVST…RYVSSTNGFS (65 aa)) constitute a mitochondrion transit peptide. Positions 353–505 (KLVKRSSIGE…NFVKSCDTAS (153 aa)) constitute an N-acetyltransferase domain. A Phosphoserine modification is found at serine 359. Cysteine 675 is a catalytic residue.

The protein in the N-terminal section; belongs to the acetylglutamate kinase family. This sequence in the C-terminal section; belongs to the NAGSA dehydrogenase family. The protein precursor is cleaved into the two biologically active enzymes, the kinase and the reductase.

It localises to the mitochondrion. It catalyses the reaction N-acetyl-L-glutamate 5-semialdehyde + phosphate + NADP(+) = N-acetyl-L-glutamyl 5-phosphate + NADPH + H(+). The catalysed reaction is N-acetyl-L-glutamate + ATP = N-acetyl-L-glutamyl 5-phosphate + ADP. It functions in the pathway amino-acid biosynthesis; L-arginine biosynthesis; N(2)-acetyl-L-ornithine from L-glutamate: step 2/4. Its pathway is amino-acid biosynthesis; L-arginine biosynthesis; N(2)-acetyl-L-ornithine from L-glutamate: step 3/4. Its activity is regulated as follows. The kinase activity is inhibited by arginine. The sequence is that of Protein ARG5,6, mitochondrial (ARG5,6) from Saccharomyces cerevisiae (strain ATCC 204508 / S288c) (Baker's yeast).